Here is a 72-residue protein sequence, read N- to C-terminus: DNA gyrase inhibitor YacG (72 aa).

Zn(2+) is bound by residues Cys17, Cys20, Cys32, and Cys36. Residues 52 to 72 are disordered; the sequence is PGPEEDEMSYPPHSNDGNRSR.

Belongs to the DNA gyrase inhibitor YacG family. Interacts with GyrB. The cofactor is Zn(2+).

Its function is as follows. Inhibits all the catalytic activities of DNA gyrase by preventing its interaction with DNA. Acts by binding directly to the C-terminal domain of GyrB, which probably disrupts DNA binding by the gyrase. The protein is DNA gyrase inhibitor YacG of Methylorubrum extorquens (strain CM4 / NCIMB 13688) (Methylobacterium extorquens).